The sequence spans 395 residues: Chalcone synthase (395 aa).

Val-2 is modified (N-acetylvaline). Residue Val-2 is modified to N-acetylalanine. Residue Cys-169 is part of the active site.

The protein belongs to the thiolase-like superfamily. Chalcone/stilbene synthases family.

It carries out the reaction (E)-4-coumaroyl-CoA + 3 malonyl-CoA + 3 H(+) = 2',4,4',6'-tetrahydroxychalcone + 3 CO2 + 4 CoA. It functions in the pathway secondary metabolite biosynthesis; flavonoid biosynthesis. The primary product of this enzyme is 4,2',4',6'-tetrahydroxychalcone (also termed naringenin-chalcone or chalcone) which can under specific conditions spontaneously isomerize into naringenin. This chain is Chalcone synthase (CHS), found in Arabidopsis thaliana (Mouse-ear cress).